The following is a 342-amino-acid chain: MADECAAFMKGTELPVKRPREEEAETEMEAANNSNNGCEKEESSPYISSVLPGWFSEISPLWPGEAHSLKVEKILFQGKSDYQNVLVFQSSTYGKVLVLDGVIQLTERDECAYQEMITHLPLCSIPNPKKVLVIGGGDGGVLREVSRHSSVEQIDICEIDKMVVEVAKQFFPDVAVGYEDPRVNLHIGDGVAFLKNVPAGTYDAVIVDSSDPIGPAQELFEKPFFESIAKALRPGGVVSTQAESIWLHMHIIEEIVANCRQIFKGSVNYAWTTVPTYPSGMIGFMLCSTEGPAVDFKNPINPIDDESPAKSIEPLKFYNSEIHQASFCLPSFAKRVIETKGK.

The interval 9 to 42 is disordered; sequence MKGTELPVKRPREEEAETEMEAANNSNNGCEKEE. The 238-residue stretch at 52-289 folds into the PABS domain; it reads PGWFSEISPL…GMIGFMLCST (238 aa). An S-adenosyl 3-(methylsulfanyl)propylamine-binding site is contributed by Gln-83. A putrescine-binding site is contributed by Tyr-113. S-adenosyl 3-(methylsulfanyl)propylamine contacts are provided by residues Gln-114, Asp-138, Glu-158, 189–190, and Asp-208; that span reads DG. The active-site Proton acceptor is Asp-208. Residues 208–211 and Tyr-277 contribute to the putrescine site; that span reads DSSD.

This sequence belongs to the spermidine/spermine synthase family.

It carries out the reaction S-adenosyl 3-(methylsulfanyl)propylamine + putrescine = S-methyl-5'-thioadenosine + spermidine + H(+). It participates in amine and polyamine biosynthesis; spermidine biosynthesis; spermidine from putrescine: step 1/1. The chain is Spermidine synthase (SPDSYN) from Solanum lycopersicum (Tomato).